The primary structure comprises 129 residues: Azurin-2 (129 aa).

One can recognise a Plastocyanin-like domain in the interval 1–129; sequence AQCEATVESN…MMKGTLKLGS (129 aa). Cysteine 3 and cysteine 26 are joined by a disulfide. 4 residues coordinate Cu cation: histidine 46, cysteine 112, histidine 117, and methionine 121.

Its subcellular location is the periplasm. Transfers electrons from cytochrome c551 to cytochrome oxidase. This Alcaligenes xylosoxydans xylosoxydans (Achromobacter xylosoxidans) protein is Azurin-2.